Consider the following 51-residue polypeptide: Ovomucoid (51 aa).

The region spanning 3-51 (IDCSGYPKPACTLEFFPLCGSDNQTYSNKCAFCNAAVEKNVTLNHIGEC) is the Kazal-like domain. 3 disulfides stabilise this stretch: C5-C35, C13-C32, and C21-C51. N42 carries an N-linked (GlcNAc...) asparagine glycan.

It is found in the secreted. This chain is Ovomucoid, found in Eudromia elegans (Elegant crested-tinamou).